Here is a 417-residue protein sequence, read N- to C-terminus: MLKREMNIADYDAELWQAMEQEKVRQEEHIELIASENYTSPRVMQAQGSQLTNKYAEGYPGKRYYGGCEYVDIVEQLAIDRAKELFGADYANVQPHSGSQANFAVYTALLEPGDTVLGMNLAHGGHLTHGSPVNFSGKLYNIVPYGIDATGHIDYADLEKQAKEHKPKMIIGGFSAYSGVVDWAKMREIADSIGAYLFVDMAHVAGLVAAGVYPNPVPHAHVVTTTTHKTLAGPRGGLILAKGGSEELYKKLNSAVFPGGQGGPLMHVIAGKAVALKEAMEPEFKTYQQQVAKNAKAMVEVFLERGYKVVSGGTDNHLFLVDLVDKNLTGKEADAALGRANITVNKNSVPNDPKSPFVTSGIRVGTPAITRRGFKEAEAKELAGWMCDVLDSINDEAVIERIKGKVLDICARYPVYA.

Lys54 carries the N6-acetyllysine modification. Residues Leu121 and 125–127 (GHL) contribute to the (6S)-5,6,7,8-tetrahydrofolate site. Lys229 carries the post-translational modification N6-(pyridoxal phosphate)lysine. An N6-acetyllysine mark is found at Lys250, Lys285, and Lys354. Residue 355 to 357 (SPF) participates in (6S)-5,6,7,8-tetrahydrofolate binding. Lys375 carries the post-translational modification N6-acetyllysine.

It belongs to the SHMT family. Homodimer. The cofactor is pyridoxal 5'-phosphate.

It is found in the cytoplasm. The catalysed reaction is (6R)-5,10-methylene-5,6,7,8-tetrahydrofolate + glycine + H2O = (6S)-5,6,7,8-tetrahydrofolate + L-serine. The protein operates within one-carbon metabolism; tetrahydrofolate interconversion. Its pathway is amino-acid biosynthesis; glycine biosynthesis; glycine from L-serine: step 1/1. Its function is as follows. Catalyzes the reversible interconversion of serine and glycine with tetrahydrofolate (THF) serving as the one-carbon carrier. This reaction serves as the major source of one-carbon groups required for the biosynthesis of purines, thymidylate, methionine, and other important biomolecules. Also exhibits THF-independent aldolase activity toward beta-hydroxyamino acids, producing glycine and aldehydes, via a retro-aldol mechanism. This is Serine hydroxymethyltransferase from Escherichia coli O1:K1 / APEC.